Consider the following 292-residue polypeptide: MASMAGPDHLFNLRNHFYLGAYQAAINNSEIPNLSQEDIVERDCLVHRAYIALGSYQLVISEIDEAAATPLQAVKLLAMYLSSPENKESTISSLREWLADPTVGNNAIIRLIAGTIFMHEEDYNEALKHTHSGGTMDLHALNVQIFIKMHRSDFAEKQLRVMQQIDEDHTLTQLASAWLNLAVGGSKIQEAYLIFQDFSEKYPMTSLILNGKAVCCMHMGNFEEAETLLLEALNKDAKDPETLANLVVCSLHVGKSSSRYLNQLKLSHPEHVLVKRAASAEDNFERALQSFA.

Belongs to the COPE family. In terms of assembly, oligomeric complex that consists of at least the alpha, beta, beta', gamma, delta, epsilon and zeta subunits.

The protein resides in the cytoplasm. Its subcellular location is the golgi apparatus membrane. It is found in the cytoplasmic vesicle. It localises to the COPI-coated vesicle membrane. In terms of biological role, the coatomer is a cytosolic protein complex that binds to dilysine motifs and reversibly associates with Golgi non-clathrin-coated vesicles, which further mediate biosynthetic protein transport from the ER, via the Golgi up to the trans Golgi network. The coatomer complex is required for budding from Golgi membranes, and is essential for the retrograde Golgi-to-ER transport of dilysine-tagged proteins. The polypeptide is Coatomer subunit epsilon-1 (Arabidopsis thaliana (Mouse-ear cress)).